Consider the following 214-residue polypeptide: Adenylate kinase (214 aa).

An ATP-binding site is contributed by 10–15; it reads GAGKGT. The NMP stretch occupies residues 30 to 59; sequence STGDMLRAAVKAGTELGKQAKEIMDAGKLV. AMP contacts are provided by residues Thr-31, Arg-36, 57–59, 85–88, and Gln-92; these read KLV and GFPR. The LID stretch occupies residues 122-159; sequence GRRVHAASGRVYHVKFNPPKVEGKDDVTGEDLTIRKDD. ATP-binding positions include Arg-123 and 132–133; that span reads VY. Residues Arg-156 and Arg-167 each contribute to the AMP site. Arg-200 is an ATP binding site.

This sequence belongs to the adenylate kinase family. Monomer.

It localises to the cytoplasm. It carries out the reaction AMP + ATP = 2 ADP. Its pathway is purine metabolism; AMP biosynthesis via salvage pathway; AMP from ADP: step 1/1. Catalyzes the reversible transfer of the terminal phosphate group between ATP and AMP. Plays an important role in cellular energy homeostasis and in adenine nucleotide metabolism. In Pectobacterium carotovorum subsp. carotovorum (strain PC1), this protein is Adenylate kinase.